A 257-amino-acid chain; its full sequence is Snake venom serine protease nikobin (257 aa).

The N-terminal stretch at 1–18 is a signal peptide; it reads MVLIRVLANLLLLQLSYA. The propeptide occupies 19 to 24; sequence QKSSEL. The 224-residue stretch at 25-248 folds into the Peptidase S1 domain; it reads VIGGDECNIN…YSDWIQSIIA (224 aa). 6 disulfides stabilise this stretch: Cys-31/Cys-162, Cys-49/Cys-65, Cys-97/Cys-255, Cys-141/Cys-209, Cys-173/Cys-188, and Cys-199/Cys-224. Residues His-64 and Asp-109 each act as charge relay system in the active site. 2 N-linked (GlcNAc...) asparagine glycosylation sites follow: Asn-120 and Asn-121. Ser-203 serves as the catalytic Charge relay system. N-linked (GlcNAc...) asparagine glycosylation occurs at Asn-250.

Belongs to the peptidase S1 family. Snake venom subfamily. Monomer. In terms of tissue distribution, expressed by the venom gland.

Its subcellular location is the secreted. Snake venom serine protease that may act in the hemostasis system of the prey. The chain is Snake venom serine protease nikobin (sp-VN) from Vipera nikolskii (Nikolsky's adder).